The primary structure comprises 840 residues: Leucine--tRNA ligase (840 aa).

The 'HIGH' region motif lies at 44 to 55 (PYPSANGLHVGH). The 'KMSKS' region signature appears at 617-621 (KMSKS). Residue lysine 620 coordinates ATP.

The protein belongs to the class-I aminoacyl-tRNA synthetase family.

The protein resides in the cytoplasm. The catalysed reaction is tRNA(Leu) + L-leucine + ATP = L-leucyl-tRNA(Leu) + AMP + diphosphate. The protein is Leucine--tRNA ligase of Borreliella burgdorferi (strain ATCC 35210 / DSM 4680 / CIP 102532 / B31) (Borrelia burgdorferi).